A 188-amino-acid chain; its full sequence is Molybdopterin synthase catalytic subunit (188 aa).

The span at 1–14 (MATQPPQDQTSTTP) shows a compositional bias: low complexity. Residues 1 to 23 (MATQPPQDQTSTTPSLPPHLDPT) are disordered. Substrate is bound by residues 134-135 (HR), Lys150, and 157-159 (KRE).

The protein belongs to the MoaE family. MOCS2B subfamily. As to quaternary structure, heterotetramer; composed of 2 small (MOCS2A) and 2 large (MOCS2B) subunits.

The protein resides in the cytoplasm. The enzyme catalyses 2 [molybdopterin-synthase sulfur-carrier protein]-C-terminal-Gly-aminoethanethioate + cyclic pyranopterin phosphate + H2O = molybdopterin + 2 [molybdopterin-synthase sulfur-carrier protein]-C-terminal Gly-Gly + 2 H(+). It participates in cofactor biosynthesis; molybdopterin biosynthesis. In terms of biological role, catalytic subunit of the molybdopterin synthase complex, a complex that catalyzes the conversion of precursor Z into molybdopterin. Acts by mediating the incorporation of 2 sulfur atoms from thiocarboxylated MOCS2A into precursor Z to generate a dithiolene group. This chain is Molybdopterin synthase catalytic subunit, found in Aspergillus fumigatus (strain ATCC MYA-4609 / CBS 101355 / FGSC A1100 / Af293) (Neosartorya fumigata).